The sequence spans 115 residues: T cell receptor beta variable 7-4 (115 aa).

The signal sequence occupies residues 1–21; that stretch reads MGTRLLCWVVLGFLGTDHTGA. The 94-residue stretch at 22 to 115 folds into the Ig-like domain; that stretch reads GVSQSPRYKV…SAVYLCASSL (94 aa). A disulfide bridge links cysteine 42 with cysteine 111. The segment at 67 to 97 is disordered; the sequence is YSQSDAQRDKSGRPSGRFSAERPERSVSTLK.

In terms of assembly, alpha-beta TR is a heterodimer composed of an alpha and beta chain; disulfide-linked. The alpha-beta TR is associated with the transmembrane signaling CD3 coreceptor proteins to form the TR-CD3 (TcR or TCR). The assembly of alpha-beta TR heterodimers with CD3 occurs in the endoplasmic reticulum where a single alpha-beta TR heterodimer associates with one CD3D-CD3E heterodimer, one CD3G-CD3E heterodimer and one CD247 homodimer forming a stable octameric structure. CD3D-CD3E and CD3G-CD3E heterodimers preferentially associate with TR alpha and TR beta chains, respectively. The association of the CD247 homodimer is the last step of TcR assembly in the endoplasmic reticulum and is required for transport to the cell surface.

The protein resides in the cell membrane. In terms of biological role, v region of the variable domain of T cell receptor (TR) beta chain that participates in the antigen recognition. Alpha-beta T cell receptors are antigen specific receptors which are essential to the immune response and are present on the cell surface of T lymphocytes. Recognize peptide-major histocompatibility (MH) (pMH) complexes that are displayed by antigen presenting cells (APC), a prerequisite for efficient T cell adaptive immunity against pathogens. Binding of alpha-beta TR to pMH complex initiates TR-CD3 clustering on the cell surface and intracellular activation of LCK that phosphorylates the ITAM motifs of CD3G, CD3D, CD3E and CD247 enabling the recruitment of ZAP70. In turn ZAP70 phosphorylates LAT, which recruits numerous signaling molecules to form the LAT signalosome. The LAT signalosome propagates signal branching to three major signaling pathways, the calcium, the mitogen-activated protein kinase (MAPK) kinase and the nuclear factor NF-kappa-B (NF-kB) pathways, leading to the mobilization of transcription factors that are critical for gene expression and essential for T cell growth and differentiation. The T cell repertoire is generated in the thymus, by V-(D)-J rearrangement. This repertoire is then shaped by intrathymic selection events to generate a peripheral T cell pool of self-MH restricted, non-autoaggressive T cells. Post-thymic interaction of alpha-beta TR with the pMH complexes shapes TR structural and functional avidity. The protein is T cell receptor beta variable 7-4 of Homo sapiens (Human).